The chain runs to 147 residues: Hemoglobin anodic subunit beta (147 aa).

Residues 2 to 147 form the Globin domain; the sequence is EWTDGERTAI…VTSALARQYH (146 aa). Heme b is bound by residues H63 and H92.

This sequence belongs to the globin family. As to quaternary structure, heterotetramer of two alpha chains and two beta chains. Red blood cells.

In terms of biological role, involved in oxygen transport from gills to the various peripheral tissues. This is Hemoglobin anodic subunit beta from Gymnothorax unicolor (Brown moray).